Here is a 977-residue protein sequence, read N- to C-terminus: SLIT and NTRK-like protein 3 (977 aa).

Residues 1-26 form the signal peptide; it reads MKPSIAEMLHRGRMLWIILLSTIALG. Residues 29–654 lie on the Extracellular side of the membrane; it reads TPIPLIEDSE…SPPGGPVPLS (626 aa). Residue N68 is glycosylated (N-linked (GlcNAc...) asparagine). LRR repeat units follow at residues 78–99, 102–123, 126–147, 150–171, 174–195, and 197–218; these read RPFKLYLQRNSMRKLYTNSFLH, NAVSINLGNNALQDIQTGAFNG, ILKRLYLHENKLDVFRNDTFLG, SLEYLQADYNVIKRIESGAFRN, KLRVLILNDNLIPMLPTNLFKA, and SLTHLDLRGNRLKVLFYRGMLD. The LRRCT 1 domain occupies 232–283; sequence NPWNCTCEIVQLKSWLERIPYTALVGDITCETPFHFHGKDLREIRKTELCPL. Residues 325–360 are disordered; it reads EYKSSNKQPKPTKQPRTPRPPSTSQALYPGPNQPPI. The LRRNT domain maps to 364 to 406; that stretch reads QTRPPIPIICPTGCTCNLHINDLGLTVNCKERGFNNISELLPR. LRR repeat units follow at residues 409–430, 433–454, 457–478, 481–502, 505–526, and 528–549; these read NAKKLYLSSNLIQKIYRSDFWN, SLDLLHLGNNRISYVQDGAFIN, NLKSLFLNGNDIEKLTPGMFRG, SLHYLYFEFNVIREIQPAAFSL, NLKLLFLNNNLLRTLPTDAFAG, and SLARLNLRKNYFLYLPVAGVLE. The LRRCT 2 domain maps to 562-613; the sequence is NPWDCTCDLVPFKQWIETISSVSVVGDVLCRSPENLTHRDVRTIELEVLCPE. N596 carries an N-linked (GlcNAc...) asparagine glycan. Residues 655-675 form a helical membrane-spanning segment; it reads VLILSLLVLFFSAVFVAAGLF. Over 676-977 the chain is Cytoplasmic; sequence AYVLRRRRKK…EVLEKTTYRF (302 aa). 2 disordered regions span residues 708-735 and 761-790; these read LFEDGGGGGGGSGGGGRPTLSSPEKAPP and EEEVAVSSAQEAGSAERGGPGTQPPGMGEA. Residues 711–724 are compositionally biased toward gly residues; it reads DGGGGGGGSGGGGR. Low complexity predominate over residues 765–775; the sequence is AVSSAQEAGSA.

It belongs to the SLITRK family. Expressed in the occipital lobe of the cerebral cortex of the brain. Expressed at higher levels in some astrocytic brain tumors such as astrocytomas, oligodendrogliomas, glioblastomas, gangliogliomas and primitive neuroectodermal tumors.

The protein resides in the membrane. In terms of biological role, suppresses neurite outgrowth. The sequence is that of SLIT and NTRK-like protein 3 (SLITRK3) from Homo sapiens (Human).